Reading from the N-terminus, the 282-residue chain is S-formylglutathione hydrolase (282 aa).

N-acetylalanine is present on A2. K4 carries the N6-succinyllysine modification. The Charge relay system role is filled by S149. K200 carries the post-translational modification N6-acetyllysine. Active-site charge relay system residues include D226 and H260.

This sequence belongs to the esterase D family. As to quaternary structure, homodimer.

The protein resides in the cytoplasm. The protein localises to the cytoplasmic vesicle. It catalyses the reaction S-formylglutathione + H2O = formate + glutathione + H(+). Serine hydrolase involved in the detoxification of formaldehyde. The sequence is that of S-formylglutathione hydrolase (Esd) from Mus musculus (Mouse).